The primary structure comprises 267 residues: Hydroxyethylthiazole kinase (267 aa).

M49 is a substrate binding site. 2 residues coordinate ATP: R124 and T170. G197 is a binding site for substrate.

This sequence belongs to the Thz kinase family. Mg(2+) is required as a cofactor.

The enzyme catalyses 5-(2-hydroxyethyl)-4-methylthiazole + ATP = 4-methyl-5-(2-phosphooxyethyl)-thiazole + ADP + H(+). The protein operates within cofactor biosynthesis; thiamine diphosphate biosynthesis; 4-methyl-5-(2-phosphoethyl)-thiazole from 5-(2-hydroxyethyl)-4-methylthiazole: step 1/1. Its function is as follows. Catalyzes the phosphorylation of the hydroxyl group of 4-methyl-5-beta-hydroxyethylthiazole (THZ). This Tolumonas auensis (strain DSM 9187 / NBRC 110442 / TA 4) protein is Hydroxyethylthiazole kinase.